The following is a 456-amino-acid chain: Bifunctional protein GlmU (456 aa).

The pyrophosphorylase stretch occupies residues 1–229 (MLNSAMSVVI…ISETDGVNNR (229 aa)). Residues 11-14 (LAAG), Lys25, Gln76, 81-82 (GT), 103-105 (YGD), Gly140, Glu154, Asn169, and Asn227 contribute to the UDP-N-acetyl-alpha-D-glucosamine site. Asp105 is a Mg(2+) binding site. Position 227 (Asn227) interacts with Mg(2+). A linker region spans residues 230–250 (LQLSRLERIYQAEQAEKLLLS). The N-acetyltransferase stretch occupies residues 251–456 (GVMLRDPARF…QGWQRPVKKK (206 aa)). UDP-N-acetyl-alpha-D-glucosamine-binding residues include Arg333 and Lys351. The active-site Proton acceptor is the His363. The UDP-N-acetyl-alpha-D-glucosamine site is built by Tyr366 and Asn377. Acetyl-CoA is bound by residues Ala380, 386–387 (NY), Ser405, Ala423, and Arg440.

It in the N-terminal section; belongs to the N-acetylglucosamine-1-phosphate uridyltransferase family. The protein in the C-terminal section; belongs to the transferase hexapeptide repeat family. Homotrimer. It depends on Mg(2+) as a cofactor.

The protein resides in the cytoplasm. It carries out the reaction alpha-D-glucosamine 1-phosphate + acetyl-CoA = N-acetyl-alpha-D-glucosamine 1-phosphate + CoA + H(+). It catalyses the reaction N-acetyl-alpha-D-glucosamine 1-phosphate + UTP + H(+) = UDP-N-acetyl-alpha-D-glucosamine + diphosphate. The protein operates within nucleotide-sugar biosynthesis; UDP-N-acetyl-alpha-D-glucosamine biosynthesis; N-acetyl-alpha-D-glucosamine 1-phosphate from alpha-D-glucosamine 6-phosphate (route II): step 2/2. Its pathway is nucleotide-sugar biosynthesis; UDP-N-acetyl-alpha-D-glucosamine biosynthesis; UDP-N-acetyl-alpha-D-glucosamine from N-acetyl-alpha-D-glucosamine 1-phosphate: step 1/1. It functions in the pathway bacterial outer membrane biogenesis; LPS lipid A biosynthesis. Its function is as follows. Catalyzes the last two sequential reactions in the de novo biosynthetic pathway for UDP-N-acetylglucosamine (UDP-GlcNAc). The C-terminal domain catalyzes the transfer of acetyl group from acetyl coenzyme A to glucosamine-1-phosphate (GlcN-1-P) to produce N-acetylglucosamine-1-phosphate (GlcNAc-1-P), which is converted into UDP-GlcNAc by the transfer of uridine 5-monophosphate (from uridine 5-triphosphate), a reaction catalyzed by the N-terminal domain. This is Bifunctional protein GlmU from Salmonella schwarzengrund (strain CVM19633).